We begin with the raw amino-acid sequence, 353 residues long: Protein MGF 360-11L (353 aa).

The stretch at 59 to 88 (ELNTVLMKAAKENNHDLIRLFVEWGADINY) is one ANK repeat.

The protein belongs to the asfivirus MGF 360 family. Interacts with host TBK1 ad IRF7.

In terms of biological role, plays a role in virus cell tropism, and may be required for efficient virus replication in macrophages. In addition, inhibits the phosphorylation of host TBK1 and IRF7 and thereby negatively regulates the host cGAS signaling pathway and antagonizes IFN-mediated antiviral activity. This chain is Protein MGF 360-11L, found in African swine fever virus (isolate Pig/Kenya/KEN-50/1950) (ASFV).